The following is a 185-amino-acid chain: TATA-box-binding protein 2 (185 aa).

A run of 2 repeats spans residues 7 to 84 (IENI…ANEL) and 100 to 178 (VQNV…KTQL).

This sequence belongs to the TBP family.

In terms of biological role, general factor that plays a role in the activation of archaeal genes transcribed by RNA polymerase. Binds specifically to the TATA box promoter element which lies close to the position of transcription initiation. The protein is TATA-box-binding protein 2 of Methanosarcina acetivorans (strain ATCC 35395 / DSM 2834 / JCM 12185 / C2A).